The following is a 288-amino-acid chain: ATP synthase gamma chain (288 aa).

It belongs to the ATPase gamma chain family. As to quaternary structure, F-type ATPases have 2 components, CF(1) - the catalytic core - and CF(0) - the membrane proton channel. CF(1) has five subunits: alpha(3), beta(3), gamma(1), delta(1), epsilon(1). CF(0) has three main subunits: a, b and c.

The protein resides in the cell inner membrane. In terms of biological role, produces ATP from ADP in the presence of a proton gradient across the membrane. The gamma chain is believed to be important in regulating ATPase activity and the flow of protons through the CF(0) complex. In Legionella pneumophila (strain Corby), this protein is ATP synthase gamma chain.